The primary structure comprises 92 residues: Small ribosomal subunit protein uS19 (92 aa).

The protein belongs to the universal ribosomal protein uS19 family.

Protein S19 forms a complex with S13 that binds strongly to the 16S ribosomal RNA. This is Small ribosomal subunit protein uS19 from Anoxybacillus flavithermus (strain DSM 21510 / WK1).